A 60-amino-acid polypeptide reads, in one-letter code: Large ribosomal subunit protein bL32 (60 aa).

The tract at residues 1–21 is disordered; that stretch reads MAVPARHTSKAKKNKRRTHYK. Over residues 7–20 the composition is skewed to basic residues; the sequence is HTSKAKKNKRRTHY.

The protein belongs to the bacterial ribosomal protein bL32 family.

This chain is Large ribosomal subunit protein bL32, found in Streptococcus uberis (strain ATCC BAA-854 / 0140J).